A 217-amino-acid polypeptide reads, in one-letter code: GTP-binding protein Rit2 (217 aa).

GTP contacts are provided by residues 27–34 (GAGGVGKS), 74–78 (DTAGQ), and 133–136 (NKID).

This sequence belongs to the small GTPase superfamily. Ras family. As to quaternary structure, interacts with AFDN, the C-terminal domain of RALGDS and RLF, but not with RIN1 and PIK3CA. RLF binds exclusively to the active GTP-bound form. Binds calmodulin. Interacts with PLXNB3.

It localises to the nucleus. The protein localises to the cell membrane. It catalyses the reaction GTP + H2O = GDP + phosphate + H(+). Its activity is regulated as follows. Alternates between an inactive form bound to GDP and an active form bound to GTP. Its function is as follows. Binds and exchanges GTP and GDP. This is GTP-binding protein Rit2 (Rit2) from Rattus norvegicus (Rat).